The chain runs to 150 residues: Transcriptional repressor NrdR (150 aa).

The disordered stretch occupies residues 1-26 (MKCPFCGNSDSKVVDSRPDKGGSGIR). A zinc finger lies at 3–34 (CPFCGNSDSKVVDSRPDKGGSGIRRRRECEQC). The ATP-cone domain maps to 49–139 (PLVLKKDGRR…VYRSFRDINE (91 aa)).

Belongs to the NrdR family. Zn(2+) serves as cofactor.

Functionally, negatively regulates transcription of bacterial ribonucleotide reductase nrd genes and operons by binding to NrdR-boxes. The sequence is that of Transcriptional repressor NrdR from Pelobacter propionicus (strain DSM 2379 / NBRC 103807 / OttBd1).